The primary structure comprises 184 residues: Peptide deformylase (184 aa).

Cys98 and His140 together coordinate Fe cation. Glu141 is a catalytic residue. His144 serves as a coordination point for Fe cation.

This sequence belongs to the polypeptide deformylase family. The cofactor is Fe(2+).

The enzyme catalyses N-terminal N-formyl-L-methionyl-[peptide] + H2O = N-terminal L-methionyl-[peptide] + formate. Functionally, removes the formyl group from the N-terminal Met of newly synthesized proteins. Requires at least a dipeptide for an efficient rate of reaction. N-terminal L-methionine is a prerequisite for activity but the enzyme has broad specificity at other positions. The chain is Peptide deformylase from Phocaeicola vulgatus (strain ATCC 8482 / DSM 1447 / JCM 5826 / CCUG 4940 / NBRC 14291 / NCTC 11154) (Bacteroides vulgatus).